Reading from the N-terminus, the 119-residue chain is NADH-quinone oxidoreductase subunit A (119 aa).

3 helical membrane passes run 7 to 27, 63 to 83, and 88 to 108; these read FPVL…MTIG, LIAI…PWGV, and IGWP…VGFV.

It belongs to the complex I subunit 3 family. NDH-1 is composed of 14 different subunits. Subunits NuoA, H, J, K, L, M, N constitute the membrane sector of the complex.

It localises to the cell inner membrane. It catalyses the reaction a quinone + NADH + 5 H(+)(in) = a quinol + NAD(+) + 4 H(+)(out). NDH-1 shuttles electrons from NADH, via FMN and iron-sulfur (Fe-S) centers, to quinones in the respiratory chain. The immediate electron acceptor for the enzyme in this species is believed to be ubiquinone. Couples the redox reaction to proton translocation (for every two electrons transferred, four hydrogen ions are translocated across the cytoplasmic membrane), and thus conserves the redox energy in a proton gradient. The polypeptide is NADH-quinone oxidoreductase subunit A (Ralstonia nicotianae (strain ATCC BAA-1114 / GMI1000) (Ralstonia solanacearum)).